Reading from the N-terminus, the 682-residue chain is MSRKQLALFEPVLLVQALTDAVKKLSPRAQWRNPVMFVVWASSVLTTLLTLAMVTGQIAGSALFTGVISLWLWFTVLFANFAEALAEGRSKAQANSLKGVKKTAFARRLRAPRHDAQADNVPAAELRKGDIVLVKAGDIIPCDGEVIEGGASVDESAITGESAPVIRESGGDFASVTGGTRILSDWLVIACSVNPGETFLDRMIAMVEGAQRRKTPNEIALTILLIALTIVFLLATATLWPFSAWGGNAVSVTVLVALLVCLIPTTIGGLLSAIGVAGMSRMLGANVIATSGRAVEAAGDVDVLLLDKTGTITLGNRQASDFIPARGVDERTLADAAQLASLADETPEGRSIVILAKQRFNLRERDVQSLHATFVPFTAQSRMSGINIDNRMIRKGSVDAIRRHVESNGGHFPADVEQNVENVARLGATPLVVVEGARVLGVIALKDIVKGGIKERFAQLRKMGIKTVMITGDNRLTAEAFAAEAGVDDFLAEATPEAKLALIRQYQAEGRLVAMTGDGTNDAPALAQADVAVAMNSGTQAAKEAGNMVDLDSNPTKLIEVVHIGKQMLMTRGSLTTFSIANDVAKYFAIIPAAFAATYPQLNALNVMGLHSPNSAILSAVIFNALIIIFLIPLALKGVSYKPLSASAMLRRNLWIYGLGGLVVPFIGIKVIDVLLTLLGLA.

4 consecutive transmembrane segments (helical) span residues 34-54 (PVMFVVWASSVLTTLLTLAMV), 58-78 (IAGSALFTGVISLWLWFTVLF), 219-239 (IALTILLIALTIVFLLATATL), and 254-274 (VLVALLVCLIPTTIGGLLSAI). The active-site 4-aspartylphosphate intermediate is the Asp307. ATP-binding positions include Asp344, Glu348, 377-384 (FTAQSRMS), and Lys395. Mg(2+) is bound by residues Asp518 and Asp522. The next 3 membrane-spanning stretches (helical) occupy residues 588 to 608 (FAIIPAAFAATYPQLNALNVM), 616 to 636 (AILSAVIFNALIIIFLIPLAL), and 662 to 682 (LVVPFIGIKVIDVLLTLLGLA).

It belongs to the cation transport ATPase (P-type) (TC 3.A.3) family. Type IA subfamily. As to quaternary structure, the system is composed of three essential subunits: KdpA, KdpB and KdpC.

It is found in the cell inner membrane. It catalyses the reaction K(+)(out) + ATP + H2O = K(+)(in) + ADP + phosphate + H(+). Part of the high-affinity ATP-driven potassium transport (or Kdp) system, which catalyzes the hydrolysis of ATP coupled with the electrogenic transport of potassium into the cytoplasm. This subunit is responsible for energy coupling to the transport system and for the release of the potassium ions to the cytoplasm. The chain is Potassium-transporting ATPase ATP-binding subunit from Salmonella choleraesuis (strain SC-B67).